Here is a 1129-residue protein sequence, read N- to C-terminus: CRISPR-associated endonuclease Cas12b (1129 aa).

The WED-I (OBD-I) domain stretch occupies residues 1–14 (MAVKSIKVKLRLDD). Residues 4 to 9 (KSIKVK) form a binds sgRNA region. Residues 15–386 (MPEIRAGLWK…FATFTLPDAT (372 aa)) are REC1 (Helical-1)domain. 2 binds DNA protospacer adjacent motif (PAM) on target DNA regions span residues 118 to 122 (QQIAR) and 143 to 144 (GN). The tract at residues 387-518 (AHPIWTRFDK…QSQSEARGER (132 aa)) is WED-II (OBD-II) domain. Residues 442 to 446 (SMSEQ) form a binds sgRNA region. A ruvC-I domain region spans residues 519–628 (RPPYAAVFRL…LLKLPGETES (110 aa)). Aspartate 570 acts as the For DNase activity of RuvC domain in catalysis. Positions 573-574 (LR) are binds non-target ssDNA. The bridge helix domain stretch occupies residues 629 to 658 (KDLRAIREERQRTLRQLRTQLAYLRLLVRC). Residues 659-784 (GSEDVGRRER…SFFGKVSGQV (126 aa)) are REC2 (Helical-II) domain. Binds sgRNA stretches follow at residues 742–746 (RPKIR), 753–754 (VG), 792–796 (RFAIT), 800–819 (HIDH…IIME), and 835–839 (WVAKY). Positions 785–900 (IRAEKGSRFA…GTMYAAFSSR (116 aa)) are ruvC-II domain. Catalysis depends on glutamate 848, which acts as the For DNase activity of RuvC domain. The binds non-target ssDNA stretch occupies residues 897-900 (FSSR). Positions 899 and 911 each coordinate phosphate. A nuc-I domain region spans residues 901–974 (FDARTGAPGI…SAEEGDFHQI (74 aa)). The tract at residues 973–978 (QIHADL) is binds sgRNA. A ruvC-III domain region spans residues 975-993 (HADLNAAQNLQQRLWSDFD). Aspartate 977 functions as the For DNase activity of RuvC domain in the catalytic mechanism. The interval 994-1129 (ISQIRLRCDW…DSACENTGDI (136 aa)) is nuc-II domain.

The protein belongs to the CRISPR-associated endonuclease Cas12b family. As to quaternary structure, monomer. A divalent metal cation is required as a cofactor.

In terms of biological role, CRISPR (clustered regularly interspaced short palindromic repeat), is an adaptive immune system that provides protection against mobile genetic elements (viruses, transposable elements and conjugative plasmids). CRISPR clusters contain sequences complementary to antecedent mobile elements and target invading nucleic acids. CRISPR clusters are transcribed and processed into CRISPR RNA (crRNA). In type II CRISPR systems correct processing of pre-crRNA requires a trans-encoded small RNA (tracrRNA), endogenous ribonuclease 3 (rnc) and this protein. The tracrRNA serves as a guide for ribonuclease 3-aided processing of pre-crRNA. Protein-crRNA-tracrRNA endonucleolytically cleave dsDNA target complementary to the spacer; protein is inactive in the absence of crRNA homologous to the target and tracrRNA. Recognizes a short motif in the CRISPR repeat sequences (the 5' PAM or protospacer adjacent motif, TTN in this organism) to help distinguish self versus nonself, as targets within the bacterial CRISPR locus do not have PAMs. PAM recognition is also required for catalytic activity. Cleavage results in staggered 6-8 base 5'-overhangs 14-17 and 23-24 bases downstream of the PAM (protospacer adjacent motif) on the non-target and target strands respectively. Both target and non-target strand DNA are probably independently cleaved in the same active site. This Alicyclobacillus acidoterrestris (strain ATCC 49025 / DSM 3922 / CIP 106132 / NCIMB 13137 / GD3B) protein is CRISPR-associated endonuclease Cas12b.